The sequence spans 66 residues: Protein translocase subunit SecE (66 aa).

The chain crosses the membrane as a helical span at residues 29–49; the sequence is LVASTLVVVVAVFIFSLTCLV.

The protein belongs to the SecE/SEC61-gamma family. As to quaternary structure, component of the Sec protein translocase complex. Heterotrimer consisting of SecY, SecE and SecG subunits. The heterotrimers can form oligomers, although 1 heterotrimer is thought to be able to translocate proteins. Interacts with the ribosome. Interacts with SecDF, and other proteins may be involved. Interacts with SecA.

The protein resides in the cell inner membrane. Its function is as follows. Essential subunit of the Sec protein translocation channel SecYEG. Clamps together the 2 halves of SecY. May contact the channel plug during translocation. The sequence is that of Protein translocase subunit SecE from Rickettsia rickettsii.